Consider the following 179-residue polypeptide: MPLYLCFGAAAPVSILWREELFWGFVAAVKRRWHTVYARTNVDIQYPMAYCVGIQSLSPCKCHVTVVVCLTFLDLRMSAINEATKIMRAFFKTFFYHHGKVPRGRWFKLYRNDWCKDPNLTVGNYIVASGALPLMLGWARSTGLRFSTFTYSDEALWSHRRRDRRLARRREKLENKVSG.

This is an uncharacterized protein from Galliformes (FAdV-1).